Consider the following 509-residue polypeptide: Dihydrolipoyl dehydrogenase, mitochondrial (509 aa).

Residues 1–35 (MQSWSRVYCSLAKRGHFNRISHGLQGLSAVPLRTY) constitute a mitochondrion transit peptide. Lys-66 carries the post-translational modification N6-acetyllysine; alternate. The residue at position 66 (Lys-66) is an N6-succinyllysine; alternate. FAD-binding positions include 71-80 (EKNETLGGTC) and Lys-89. Cysteines 80 and 85 form a disulfide. 4 positions are modified to N6-acetyllysine; alternate: Lys-104, Lys-122, Lys-132, and Lys-143. Lys-104, Lys-122, Lys-132, and Lys-143 each carry N6-succinyllysine; alternate. Residue Gly-154 coordinates FAD. Residues Lys-159 and Lys-166 each carry the N6-succinyllysine modification. 183 to 185 (TGS) contributes to the FAD binding site. NAD(+) contacts are provided by residues 220 to 227 (GAGVIGVE) and Glu-243. N6-succinyllysine is present on residues Lys-273 and Lys-277. Residue Val-278 participates in NAD(+) binding. Phosphoserine is present on residues Ser-285 and Ser-297. Gly-314 provides a ligand contact to NAD(+). At Lys-346 the chain carries N6-acetyllysine. FAD contacts are provided by residues Asp-355 and 361 to 364 (MLAH). Lys-410 bears the N6-acetyllysine; alternate mark. N6-succinyllysine; alternate is present on Lys-410. An N6-acetyllysine mark is found at Lys-417 and Lys-420. Lys-430 is subject to N6-succinyllysine. The active-site Proton acceptor is the His-487. Position 502 is a phosphoserine (Ser-502). At Lys-505 the chain carries N6-acetyllysine; alternate. An N6-succinyllysine; alternate modification is found at Lys-505.

Belongs to the class-I pyridine nucleotide-disulfide oxidoreductase family. Homodimer. Part of the multimeric pyruvate dehydrogenase complex that contains multiple copies of pyruvate dehydrogenase (subunits PDHA (PDHA1 or PDHA2) and PDHB, E1), dihydrolipoamide acetyltransferase (DLAT, E2) and lipoamide dehydrogenase (DLD, E3). These subunits are bound to an inner core composed of about 48 DLAT and 12 PDHX molecules (by non covalent bonds). The 2-oxoglutarate dehydrogenase complex is composed of OGDH (2-oxoglutarate dehydrogenase; E1), DLST (dihydrolipoamide succinyltransferase; E2), DLD (dihydrolipoamide dehydrogenase; E3) and the assembly factor KGD4. It contains multiple copies of the three enzymatic components (E1, E2 and E3). In the nucleus, the 2-oxoglutarate dehydrogenase complex associates with KAT2A. Interacts with PDHX. FAD is required as a cofactor. In terms of processing, tyrosine phosphorylated.

It localises to the mitochondrion matrix. The protein resides in the nucleus. The protein localises to the cell projection. It is found in the cilium. Its subcellular location is the flagellum. It localises to the cytoplasmic vesicle. The protein resides in the secretory vesicle. The protein localises to the acrosome. It catalyses the reaction N(6)-[(R)-dihydrolipoyl]-L-lysyl-[protein] + NAD(+) = N(6)-[(R)-lipoyl]-L-lysyl-[protein] + NADH + H(+). Lipoamide dehydrogenase is a component of the glycine cleavage system as well as an E3 component of three alpha-ketoacid dehydrogenase complexes (pyruvate-, alpha-ketoglutarate-, and branched-chain amino acid-dehydrogenase complex). The 2-oxoglutarate dehydrogenase complex is mainly active in the mitochondrion. A fraction of the 2-oxoglutarate dehydrogenase complex also localizes in the nucleus and is required for lysine succinylation of histones: associates with KAT2A on chromatin and provides succinyl-CoA to histone succinyltransferase KAT2A. In monomeric form may have additional moonlighting function as serine protease. Involved in the hyperactivation of spermatazoa during capacitation and in the spermatazoal acrosome reaction. The protein is Dihydrolipoyl dehydrogenase, mitochondrial (DLD) of Pongo abelii (Sumatran orangutan).